Consider the following 127-residue polypeptide: Small ribosomal subunit protein uS12 (127 aa).

The span at 11 to 20 (GRKPKKKKSK) shows a compositional bias: basic residues. Residues 11–30 (GRKPKKKKSKAPALQGNPQK) form a disordered region. D89 bears the 3-methylthioaspartic acid mark. Positions 105–127 (AGVEGRRQSRSKYGAKRPKDQKK) are disordered. Residues 112-127 (QSRSKYGAKRPKDQKK) show a composition bias toward basic residues.

This sequence belongs to the universal ribosomal protein uS12 family. As to quaternary structure, part of the 30S ribosomal subunit. Contacts proteins S8 and S17. May interact with IF1 in the 30S initiation complex.

With S4 and S5 plays an important role in translational accuracy. In terms of biological role, interacts with and stabilizes bases of the 16S rRNA that are involved in tRNA selection in the A site and with the mRNA backbone. Located at the interface of the 30S and 50S subunits, it traverses the body of the 30S subunit contacting proteins on the other side and probably holding the rRNA structure together. The combined cluster of proteins S8, S12 and S17 appears to hold together the shoulder and platform of the 30S subunit. The chain is Small ribosomal subunit protein uS12 from Thermotoga maritima (strain ATCC 43589 / DSM 3109 / JCM 10099 / NBRC 100826 / MSB8).